Here is a 794-residue protein sequence, read N- to C-terminus: Phenylalanine--tRNA ligase beta subunit (794 aa).

One can recognise a tRNA-binding domain in the interval 40–158; that stretch reads NSLNSELILG…LKKYIGSDVK (119 aa). The 76-residue stretch at 402-477 folds into the B5 domain; that stretch reads KNKQSLEIKL…RLYSYDKIDE (76 aa). The Mg(2+) site is built by aspartate 455, aspartate 461, glutamate 464, and glutamate 465. Residues 702–794 enclose the FDX-ACB domain; sequence SKFQSSSRDL…NIKQMKVVIR (93 aa).

The protein belongs to the phenylalanyl-tRNA synthetase beta subunit family. Type 1 subfamily. Tetramer of two alpha and two beta subunits. It depends on Mg(2+) as a cofactor.

It localises to the cytoplasm. The catalysed reaction is tRNA(Phe) + L-phenylalanine + ATP = L-phenylalanyl-tRNA(Phe) + AMP + diphosphate + H(+). The chain is Phenylalanine--tRNA ligase beta subunit from Mycoplasma mycoides subsp. mycoides SC (strain CCUG 32753 / NCTC 10114 / PG1).